The following is a 424-amino-acid chain: Histidine--tRNA ligase (424 aa).

The protein belongs to the class-II aminoacyl-tRNA synthetase family. Homodimer.

Its subcellular location is the cytoplasm. It catalyses the reaction tRNA(His) + L-histidine + ATP = L-histidyl-tRNA(His) + AMP + diphosphate + H(+). This chain is Histidine--tRNA ligase, found in Yersinia pestis bv. Antiqua (strain Antiqua).